The sequence spans 187 residues: UPF0340 protein SGO_0411 (187 aa).

This sequence belongs to the UPF0340 family.

This Streptococcus gordonii (strain Challis / ATCC 35105 / BCRC 15272 / CH1 / DL1 / V288) protein is UPF0340 protein SGO_0411.